Reading from the N-terminus, the 332-residue chain is SLAM family member 6 (332 aa).

Positions 1–21 (MLWLFQSLLFVFCFGPGNVVS) are cleaved as a signal peptide. Over 22 to 226 (QSSLTPLMVN…VKIQYTDTKM (205 aa)) the chain is Extracellular. One can recognise an Ig-like V-type domain in the interval 35-120 (GESVTLPLEF…ISTKTSAKLS (86 aa)). Asn-58, Asn-87, Asn-137, Asn-144, Asn-161, Asn-178, and Asn-203 each carry an N-linked (GlcNAc...) asparagine glycan. The region spanning 132–209 (NIQVTNHSQL…AVSNLSFSVS (78 aa)) is the Ig-like C2-type domain. Disulfide bonds link Cys-147–Cys-214 and Cys-153–Cys-195. Residues 227–247 (ILFMVSGICIVFGFIILLLLV) traverse the membrane as a helical segment. Topologically, residues 248 to 331 (LRKRRDSLSL…FSRATALDNV (84 aa)) are cytoplasmic. Residue Tyr-274 is modified to Phosphotyrosine. Phosphoserine is present on Ser-278. Short sequence motifs (ITSM) lie at residues 283 to 288 (TVYASV) and 307 to 312 (TIYSTI). Phosphotyrosine is present on Tyr-309.

In terms of assembly, homodimer. Interacts with PTN6. Interacts (phosphorylated) with PTN11. Interacts (phosphorylated on tyrosine residues) with SH2D1A/SAP and SH2D1B/EAT2; SH2D1A and SH2D1B can associate with the same SLAMF6 molecule; interaction with SH2D1B is mediated by ITSM 2. Post-translationally, phosphorylation in NK cells upon engagment by SLAMF6-expressing target cells is leading to receptor activation. As to expression, expressed by all (resting and activated) natural killer cells (NK), T- and B-lymphocytes. Increased surface expression on T-cells of systemic lupus erythematosus (SLE) patients.

The protein resides in the cell membrane. In terms of biological role, self-ligand receptor of the signaling lymphocytic activation molecule (SLAM) family. SLAM receptors triggered by homo- or heterotypic cell-cell interactions are modulating the activation and differentiation of a wide variety of immune cells and thus are involved in the regulation and interconnection of both innate and adaptive immune response. Activities are controlled by presence or absence of small cytoplasmic adapter proteins, SH2D1A/SAP and/or SH2D1B/EAT-2. Triggers cytolytic activity only in natural killer cells (NK) expressing high surface densities of natural cytotoxicity receptors. Positive signaling in NK cells implicates phosphorylation of VAV1. NK cell activation seems to depend on SH2D1B and not on SH2D1A. In conjunction with SLAMF1 controls the transition between positive selection and the subsequent expansion and differentiation of the thymocytic natural killer T (NKT) cell lineage. Promotes T-cell differentiation into a helper T-cell Th17 phenotype leading to increased IL-17 secretion; the costimulatory activity requires SH2D1A. Promotes recruitment of RORC to the IL-17 promoter. In conjunction with SLAMF1 and CD84/SLAMF5 may be a negative regulator of the humoral immune response. In the absence of SH2D1A/SAP can transmit negative signals to CD4(+) T-cells and NKT cells. Negatively regulates germinal center formation by inhibiting T-cell:B-cell adhesion; the function probably implicates increased association with PTPN6/SHP-1 via ITSMs in absence of SH2D1A/SAP. However, reported to be involved in maintaining B-cell tolerance in germinal centers and in preventing autoimmunity. This chain is SLAM family member 6 (SLAMF6), found in Homo sapiens (Human).